A 235-amino-acid chain; its full sequence is 2-C-methyl-D-erythritol 4-phosphate cytidylyltransferase (235 aa).

Belongs to the IspD/TarI cytidylyltransferase family. IspD subfamily.

It carries out the reaction 2-C-methyl-D-erythritol 4-phosphate + CTP + H(+) = 4-CDP-2-C-methyl-D-erythritol + diphosphate. It participates in isoprenoid biosynthesis; isopentenyl diphosphate biosynthesis via DXP pathway; isopentenyl diphosphate from 1-deoxy-D-xylulose 5-phosphate: step 2/6. Catalyzes the formation of 4-diphosphocytidyl-2-C-methyl-D-erythritol from CTP and 2-C-methyl-D-erythritol 4-phosphate (MEP). This chain is 2-C-methyl-D-erythritol 4-phosphate cytidylyltransferase, found in Pseudomonas fluorescens (strain Pf0-1).